We begin with the raw amino-acid sequence, 314 residues long: Olfactory receptor 52K2 (314 aa).

Topologically, residues 1–27 are extracellular; it reads MSASNITLTHPTAFLLVGIPGLEHLHI. Residue N5 is glycosylated (N-linked (GlcNAc...) asparagine). The helical transmembrane segment at 28–48 threads the bilayer; the sequence is WISIPFCLAYTLALLGNCTLL. Residues 49–56 lie on the Cytoplasmic side of the membrane; the sequence is LIIQADAA. The helical transmembrane segment at 57-77 threads the bilayer; that stretch reads LHEPMYLFLAMLAAIDLVLSS. Residues 78–101 lie on the Extracellular side of the membrane; the sequence is SALPKMLAIFWFRDREINFFACLA. C99 and C191 are oxidised to a cystine. A helical transmembrane segment spans residues 102 to 122; it reads QMFFLHSFSIMESAVLLAMAF. At 123 to 141 the chain is on the cytoplasmic side; sequence DRYVAICKPLHYTKVLTGS. Residues 142 to 162 traverse the membrane as a helical segment; the sequence is LITKIGMAAVARAVTLMTPLP. Residues 163–198 are Extracellular-facing; it reads FLLRCFHYCRGPVIAHCYCEHMAVVRLACGDTSFNN. A helical membrane pass occupies residues 199 to 219; that stretch reads IYGIAVAMFIVVLDLLLVILS. Over 220–239 the chain is Cytoplasmic; the sequence is YIFILQAVLLLASQEARYKA. Residues 240-260 form a helical membrane-spanning segment; the sequence is FGTCVSHIGAILAFYTTVVIS. The Extracellular segment spans residues 261–275; the sequence is SVMHRVARHAAPHVH. The chain crosses the membrane as a helical span at residues 276 to 296; it reads ILLANFYLLFPPMVNPIIYGV. The Cytoplasmic portion of the chain corresponds to 297–314; the sequence is KTKQIRESILGVFPRKDM.

This sequence belongs to the G-protein coupled receptor 1 family.

The protein localises to the cell membrane. Its function is as follows. Odorant receptor. The sequence is that of Olfactory receptor 52K2 (OR52K2) from Homo sapiens (Human).